Here is a 74-residue protein sequence, read N- to C-terminus: Large ribosomal subunit protein bL28 (74 aa).

It belongs to the bacterial ribosomal protein bL28 family.

This chain is Large ribosomal subunit protein bL28, found in Buchnera aphidicola subsp. Baizongia pistaciae (strain Bp).